Consider the following 1212-residue polypeptide: DNA topoisomerase 1 (1212 aa).

The 114-residue stretch at 1-114 (MKLVVVESPA…DVERVTFNAI (114 aa)) folds into the Toprim domain. Positions 7 and 80 each coordinate Mg(2+). One can recognise a Topo IA-type catalytic domain in the interval 130–556 (DNDLINAYLA…AFWHDFKPKT (427 aa)). The tract at residues 164–169 (SAGRVQ) is interaction with DNA. Tyr-293 acts as the O-(5'-phospho-DNA)-tyrosine intermediate in catalysis. Residues 592-619 (CPSCHTGRLALKGGRFGAFIACSNYPEC) form a C4-type zinc finger. Disordered regions lie at residues 687-742 (GKGN…GVST), 758-937 (ALAG…KARA), and 1107-1212 (RAKM…EVAE). Composition is skewed to polar residues over residues 708–742 (ASST…GVST) and 770–782 (VSDN…SSTI). Residues 815 to 840 (ADNRLLSHRNGDIDSRAIPADHKDSS) show a composition bias toward basic and acidic residues. 2 stretches are compositionally biased toward polar residues: residues 881–890 (AITSDNSPSD) and 897–906 (STPSSATSSV). Residues 921–934 (KADEQAKEEEESRK) are compositionally biased toward basic and acidic residues. Residues 1109 to 1140 (KMPKKKKTKKAAAKKPAAKKTTTKKAAPKKAT) are compositionally biased toward basic residues. The span at 1141 to 1151 (TKTATPKSATT) shows a compositional bias: low complexity. The span at 1167–1182 (PAKKAVAKKTTAKKPA) shows a compositional bias: basic residues. The segment covering 1183-1199 (SKSATKKAPSSKTTAAK) has biased composition (low complexity).

This sequence belongs to the type IA topoisomerase family. Monomer. Mg(2+) is required as a cofactor.

The enzyme catalyses ATP-independent breakage of single-stranded DNA, followed by passage and rejoining.. Its function is as follows. Releases the supercoiling and torsional tension of DNA, which is introduced during the DNA replication and transcription, by transiently cleaving and rejoining one strand of the DNA duplex. Introduces a single-strand break via transesterification at a target site in duplex DNA. The scissile phosphodiester is attacked by the catalytic tyrosine of the enzyme, resulting in the formation of a DNA-(5'-phosphotyrosyl)-enzyme intermediate and the expulsion of a 3'-OH DNA strand. The free DNA strand then undergoes passage around the unbroken strand, thus removing DNA supercoils. Finally, in the religation step, the DNA 3'-OH attacks the covalent intermediate to expel the active-site tyrosine and restore the DNA phosphodiester backbone. The protein is DNA topoisomerase 1 of Zymomonas mobilis subsp. mobilis (strain ATCC 31821 / ZM4 / CP4).